Reading from the N-terminus, the 67-residue chain is DNA-directed RNA polymerases I, II, and III subunit RPABC5 (67 aa).

The Zn(2+) site is built by Cys7, Cys10, Cys44, and Cys45.

This sequence belongs to the archaeal Rpo10/eukaryotic RPB10 RNA polymerase subunit family. Component of the RNA polymerase I (Pol I), RNA polymerase II (Pol II) and RNA polymerase III (Pol III) complexes consisting of at least 13, 12 and 17 subunits, respectively. Pol I complex consists of a ten-subunit catalytic core composed of POLR1A/RPA1, POLR1B/RPA2, POLR1C/RPAC1, POLR1D/RPAC2, POLR1H/RPA12, POLR2E/RPABC1, POLR2F/RPABC2, POLR2H/RPABC3, POLR2K/RPABC4 and POLR2L/RPABC5; a mobile stalk subunit POLR1F/RPA43 protruding from the core and additional subunits homologous to general transcription factors POLR1E/RPA49 and POLR1G/RPA34. Part of Pol I pre-initiation complex (PIC), in which Pol I core assembles with RRN3 and promoter-bound UTBF and SL1/TIF-IB complex. Pol II complex contains a ten-subunit catalytic core composed of POLR2A/RPB1, POLR2B/RPB2, POLR2C/RPB3, POLR2I/RPB9, POLR2J/RPB11, POLR2E/RPABC1, POLR2F/RPABC2, POLR2H/RPABC3, POLR2K/RPABC4 and POLR2L/RPABC5 and a mobile stalk composed of two subunits POLR2D/RPB4 and POLR2G/RPB7. Part of Pol II(G) complex, in which Pol II core associates with an additional subunit POLR2M; unlike conventional Pol II, Pol II(G) functions as a transcriptional repressor. Part of TBP-based Pol II pre-initiation complex (PIC), in which Pol II core assembles with general transcription factors and other specific initiation factors including GTF2E1, GTF2E2, GTF2F1, GTF2F2, TCEA1, ERCC2, ERCC3, GTF2H2, GTF2H3, GTF2H4, GTF2H5, GTF2A1, GTF2A2, GTF2B and TBP; this large multi-subunit PIC complex mediates DNA unwinding and targets Pol II core to the transcription start site where the first phosphodiester bond forms. Pol III complex consists of a ten-subunit catalytic core composed of POLR3A/RPC1, POLR3B/RPC2, POLR1C/RPAC1, POLR1D/RPAC2, POLR3K/RPC10, POLR2E/RPABC1, POLR2F/RPABC2, POLR2H/RPABC3, POLR2K/RPABC4 and POLR2L/RPABC5; a mobile stalk composed of two subunits POLR3H/RPC8 and CRCP/RPC9, protruding from the core and functioning primarily in transcription initiation; and additional subunits homologous to general transcription factors of the RNA polymerase II machinery, POLR3C/RPC3-POLR3F/RPC6-POLR3G/RPC7 heterotrimer required for transcription initiation and POLR3D/RPC4-POLR3E/RPC5 heterodimer involved in both transcription initiation and termination.

The protein resides in the nucleus. The protein localises to the nucleolus. In terms of biological role, DNA-dependent RNA polymerase catalyzes the transcription of DNA into RNA using the four ribonucleoside triphosphates as substrates. Common component of RNA polymerases I, II and III which synthesize ribosomal RNA precursors, mRNA precursors and many functional non-coding RNAs, and a small RNAs, such as 5S rRNA and tRNAs, respectively. The chain is DNA-directed RNA polymerases I, II, and III subunit RPABC5 (POLR2L) from Bos taurus (Bovine).